The primary structure comprises 508 residues: Maturase K (508 aa).

It belongs to the intron maturase 2 family. MatK subfamily.

It is found in the plastid. The protein localises to the chloroplast. Usually encoded in the trnK tRNA gene intron. Probably assists in splicing its own and other chloroplast group II introns. The protein is Maturase K of Lupinus cosentinii (West Australian blue lupine).